The primary structure comprises 365 residues: tRNA N6-adenosine threonylcarbamoyltransferase (365 aa).

Fe cation-binding residues include His111 and His115. Substrate is bound by residues 140 to 144 (IVSGG), Asp173, Gly186, and Asn298. Asp323 contacts Fe cation.

This sequence belongs to the KAE1 / TsaD family. Fe(2+) serves as cofactor.

It localises to the cytoplasm. The catalysed reaction is L-threonylcarbamoyladenylate + adenosine(37) in tRNA = N(6)-L-threonylcarbamoyladenosine(37) in tRNA + AMP + H(+). Functionally, required for the formation of a threonylcarbamoyl group on adenosine at position 37 (t(6)A37) in tRNAs that read codons beginning with adenine. Is involved in the transfer of the threonylcarbamoyl moiety of threonylcarbamoyl-AMP (TC-AMP) to the N6 group of A37, together with TsaE and TsaB. TsaD likely plays a direct catalytic role in this reaction. In Thermomicrobium roseum (strain ATCC 27502 / DSM 5159 / P-2), this protein is tRNA N6-adenosine threonylcarbamoyltransferase.